The sequence spans 139 residues: METDCNPMELSSMSGFEEGSELNGFEGTDMKDMRLEAEAVVNDVLFAVNNMFVSKSLRCADDVAYINVETKERNRYCLELTEAGLKVVGYDFDQVDDHLQTPYHETVYSLLDTLSPAYREAFGNALLQRLEALKRDGQS.

Residues 1–22 (METDCNPMELSSMSGFEEGSEL) form a disordered region. A required for PRKAR2A interaction; contributes to a protective effect against H(2)O(2)-induced apoptosis region spans residues 41-45 (VNDVL). Residues 115-139 (SPAYREAFGNALLQRLEALKRDGQS) form an interaction with GSK3B and acts as a GSK3B inhibitor region.

It belongs to the GSKIP family. In terms of assembly, forms a complex composed of PRKAR2A or PRKAR2B, GSK3B and GSKIP through GSKIP interaction; facilitates PKA-induced phosphorylation of GSK3B leading to GSK3B inactivation; recruits DNM1L through GSK3B for PKA-mediated phosphorylation of DNM1L; promotes beta-catenin degradation through GSK3B-induced phosphorylation of beta-catenin; stabilizes beta-catenin and enhances Wnt-induced signaling through PKA-induced phosphorylation of beta-catenin. Interacts with GSK3B; induces GSK3B-mediated phosphorylation of GSKIP and inhibits GSK3B kinase activity. In terms of processing, phosphorylated by GSK3B.

It localises to the cytoplasm. The protein localises to the nucleus. In terms of biological role, A-kinase anchoring protein for GSK3B and PKA that regulates or facilitates their kinase activity towards their targets. The ternary complex enhances Wnt-induced signaling by facilitating the GSK3B- and PKA-induced phosphorylation of beta-catenin leading to beta-catenin degradation and stabilization respectively. Upon cAMP activation, the ternary complex contributes to neuroprotection against oxidative stress-induced apoptosis by facilitating the PKA-induced phosphorylation of DML1 and PKA-induced inactivation of GSK3B. During neurite outgrowth promotes neuron proliferation; while increases beta-catenin-induced transcriptional activity through GSK3B kinase activity inhibition, reduces N-cadherin level to promote cell cycle progression. May play a role in cleft palate formation and is required for postnatal life through modulation of the activity of GSK3B during development. In Macaca fascicularis (Crab-eating macaque), this protein is GSK3-beta interaction protein.